Consider the following 283-residue polypeptide: uncharacterized protein (283 aa).

Residues 1–25 (MNKKRLLFRTPLDALFLLFGTALSA) form the signal peptide. Cysteine 26 carries N-palmitoyl cysteine lipidation. The S-diacylglycerol cysteine moiety is linked to residue cysteine 26.

It belongs to the MG439/MG440 family.

It is found in the cell membrane. This is an uncharacterized protein from Mycoplasma pneumoniae (strain ATCC 29342 / M129 / Subtype 1) (Mycoplasmoides pneumoniae).